Reading from the N-terminus, the 144-residue chain is Probable low molecular weight protein-tyrosine-phosphatase AmsI (144 aa).

The active-site Nucleophile is cysteine 9. Arginine 15 is an active-site residue. Catalysis depends on aspartate 115, which acts as the Proton donor.

Belongs to the low molecular weight phosphotyrosine protein phosphatase family.

It catalyses the reaction O-phospho-L-tyrosyl-[protein] + H2O = L-tyrosyl-[protein] + phosphate. Its function is as follows. May function as a phosphatase required for amylovoran (an exopolysaccharide that functions as a virulence factor) production. In Erwinia amylovora (Fire blight bacteria), this protein is Probable low molecular weight protein-tyrosine-phosphatase AmsI (amsI).